Here is a 332-residue protein sequence, read N- to C-terminus: Spherulin-4 (332 aa).

Residues 1–22 (MNIKIVVLVIFAILLGSALAWH) form the signal peptide. The interval 26–60 (HHNPTKAPTEAPHRGGGGGGGHNTPAPTQPPRQNT) is disordered.

The sequence is that of Spherulin-4 from Physarum polycephalum (Slime mold).